We begin with the raw amino-acid sequence, 449 residues long: Tubulin beta-5 chain (449 aa).

The GTP site is built by Q11, E70, S139, G143, T144, G145, N205, and N227. Mg(2+) is bound at residue E70. The interval 427–449 (QDATADEEGEYDVEEEEEGDYET) is disordered. Residues 430–449 (TADEEGEYDVEEEEEGDYET) are compositionally biased toward acidic residues.

This sequence belongs to the tubulin family. In terms of assembly, dimer of alpha and beta chains. A typical microtubule is a hollow water-filled tube with an outer diameter of 25 nm and an inner diameter of 15 nM. Alpha-beta heterodimers associate head-to-tail to form protofilaments running lengthwise along the microtubule wall with the beta-tubulin subunit facing the microtubule plus end conferring a structural polarity. Microtubules usually have 13 protofilaments but different protofilament numbers can be found in some organisms and specialized cells. Mg(2+) serves as cofactor.

Its subcellular location is the cytoplasm. The protein resides in the cytoskeleton. Functionally, tubulin is the major constituent of microtubules, a cylinder consisting of laterally associated linear protofilaments composed of alpha- and beta-tubulin heterodimers. Microtubules grow by the addition of GTP-tubulin dimers to the microtubule end, where a stabilizing cap forms. Below the cap, tubulin dimers are in GDP-bound state, owing to GTPase activity of alpha-tubulin. This Arabidopsis thaliana (Mouse-ear cress) protein is Tubulin beta-5 chain (TUBB5).